The sequence spans 84 residues: Envelope small membrane protein (84 aa).

Topologically, residues 1 to 18 are virion surface; the sequence is MFMADAYLADTVWYVGQI. The chain crosses the membrane as a helical span at residues 19–39; sequence IFIVAICLLVIIVVVAFLATF. The Intravirion portion of the chain corresponds to 40–80; it reads KLCIQLCGMCNTLVLSPSIYVFNRGRQFYEFYNDVKPPVLD.

The protein belongs to the betacoronaviruses E protein family. In terms of assembly, homopentamer. Interacts with membrane protein M in the budding compartment of the host cell, which is located between endoplasmic reticulum and the Golgi complex. Interacts with Nucleoprotein.

It localises to the host Golgi apparatus membrane. Functionally, plays a central role in virus morphogenesis and assembly. Acts as a viroporin and self-assembles in host membranes forming pentameric protein-lipid pores that allow ion transport. Also plays a role in the induction of apoptosis. In Porcine hemagglutinating encephalomyelitis virus (strain 67N) (HEV-67N), this protein is Envelope small membrane protein.